A 339-amino-acid polypeptide reads, in one-letter code: D-erythrose-4-phosphate dehydrogenase (339 aa).

11-12 (RI) is a binding site for NAD(+). Substrate contacts are provided by residues 158 to 160 (SCT), arginine 204, 217 to 218 (TK), and arginine 240. The active-site Nucleophile is cysteine 159. Asparagine 322 lines the NAD(+) pocket.

The protein belongs to the glyceraldehyde-3-phosphate dehydrogenase family. Epd subfamily. As to quaternary structure, homotetramer.

It localises to the cytoplasm. It carries out the reaction D-erythrose 4-phosphate + NAD(+) + H2O = 4-phospho-D-erythronate + NADH + 2 H(+). It functions in the pathway cofactor biosynthesis; pyridoxine 5'-phosphate biosynthesis; pyridoxine 5'-phosphate from D-erythrose 4-phosphate: step 1/5. Its function is as follows. Catalyzes the NAD-dependent conversion of D-erythrose 4-phosphate to 4-phosphoerythronate. This chain is D-erythrose-4-phosphate dehydrogenase, found in Aliivibrio fischeri (strain ATCC 700601 / ES114) (Vibrio fischeri).